A 547-amino-acid polypeptide reads, in one-letter code: MFS-type transporter M6 (547 aa).

The tract at residues 1 to 45 (MHRRRRDNLMTPAEMVASMKPPQSLSTEDDDGSRRDSESSADVLK) is disordered. A helical transmembrane segment spans residues 81–101 (VLVVASFAAAISPFSTSTYYP). The N-linked (GlcNAc...) asparagine glycan is linked to N118. The chain crosses the membrane as a helical span at residues 146 to 166 (PMFLVCFAIYFVANVGLALQN). The N-linked (GlcNAc...) asparagine glycan is linked to N167. 2 helical membrane-spanning segments follow: residues 206–226 (LIYA…IGGL) and 236–256 (VFWF…IFFG). Residue N274 is glycosylated (N-linked (GlcNAc...) asparagine). 5 helical membrane-spanning segments follow: residues 317 to 337 (FILS…TSVL), 347 to 367 (YDAV…LLAY), 407 to 427 (LGFV…YGWQ), 432 to 452 (APLA…TGVM), and 469 to 489 (AVGA…VAVV). Residue N493 is glycosylated (N-linked (GlcNAc...) asparagine). A helical transmembrane segment spans residues 496–516 (AGIGWTATVTAGLWVLMMPTL).

This sequence belongs to the major facilitator superfamily. CAR1 family.

The protein localises to the membrane. Its function is as follows. MFS-type transporter; part of the gene cluster that mediates the biosynthesis of squalestatin S1 (SQS1, also known as zaragozic acid A), a heavily oxidized fungal polyketide that offers potent cholesterol lowering activity by targeting squalene synthase (SS). This chain is MFS-type transporter M6, found in Phoma sp. (strain ATCC 20986 / MF5453).